Reading from the N-terminus, the 239-residue chain is Large ribosomal subunit protein uL1 (239 aa).

This sequence belongs to the universal ribosomal protein uL1 family. In terms of assembly, part of the 50S ribosomal subunit.

Its function is as follows. Binds directly to 23S rRNA. The L1 stalk is quite mobile in the ribosome, and is involved in E site tRNA release. In terms of biological role, protein L1 is also a translational repressor protein, it controls the translation of the L11 operon by binding to its mRNA. This chain is Large ribosomal subunit protein uL1, found in Rickettsia akari (strain Hartford).